A 61-amino-acid polypeptide reads, in one-letter code: Statherin (61 aa).

Positions 1–19 are cleaved as a signal peptide; the sequence is MXFLXFXLXLLXMXXMXXX. The segment at 20–25 is hydroxyapatite-binding; inhibits crystal growth; it reads DSSEEK. Ser21 and Ser22 each carry phosphoserine. Residues 37–61 form a disordered region; sequence RYGPYQPFAPQPLYPQPYQPYQPQY. The segment at 37-61 is hydrophobic; inhibits precipitation of calcium phosphate salts; it reads RYGPYQPFAPQPLYPQPYQPYQPQY. The segment covering 43 to 61 has biased composition (pro residues); it reads PFAPQPLYPQPYQPYQPQY.

The protein belongs to the histatin/statherin family. In terms of tissue distribution, secreted by parotid and submandibular glands.

The protein resides in the secreted. Salivary protein that stabilizes saliva supersaturated with calcium salts by inhibiting the precipitation of calcium phosphate salts. It also modulates hydroxyapatite crystal formation on the tooth surface. This is Statherin (STATH) from Macaca fascicularis (Crab-eating macaque).